The following is a 146-amino-acid chain: Nitric oxide reductase subunit C (146 aa).

Residues 13–29 (IYFGGSVFFFLVFLGLT) traverse the membrane as a helical; Signal-anchor segment. Residues Cys-61, Cys-64, and His-65 each contribute to the heme c site.

Heterodimer of cytochromes b (large subunit) and c (small subunit).

The protein localises to the cell membrane. Component of the anaerobic respiratory chain that transforms nitrate to dinitrogen (denitrification). The protein is Nitric oxide reductase subunit C (norC) of Stutzerimonas stutzeri (Pseudomonas stutzeri).